We begin with the raw amino-acid sequence, 1183 residues long: RecQ-like DNA helicase BLM (1183 aa).

Residues 1-109 (MEEARAATNG…AAEQDSSAEH (109 aa)) are disordered. Polar residues predominate over residues 14–27 (ESQKLSNGEKSSQL). Residues 38–48 (ADIELEEDDYL) show a composition bias toward acidic residues. Residues 110–162 (ADKGLHLEQQLYSVMEDICKLVDAIPLHELTSISCAKELLQQRELRRKLLADS) are necessary for dimerization and homooligomerization. Disordered stretches follow at residues 164 to 215 (ALNT…LPSV), 260 to 323 (PKVN…GCWD), and 381 to 408 (GSAP…PLVH). 2 stretches are compositionally biased toward polar residues: residues 206–215 (TPKSTNLPSV) and 265–280 (KGST…SFNG). ATP contacts are provided by residues 439-443 (FRTNQ) and 463-467 (GGGKS). The region spanning 447 to 622 (INAALLGEDC…QNQLEMLKPQ (176 aa)) is the Helicase ATP-binding domain. Positions 566-569 (DEAH) match the DEAH box motif. 3' overhang DNA-binding regions lie at residues 641–644 (KPKK) and 668–670 (SRH). Residues 648–795 (DCLEWIKKYH…TRQTHFNNLY (148 aa)) form the Helicase C-terminal domain. R753 contributes to the ATP binding site. Residues 771–774 (RLRR) are 3' overhang DNA-binding. Residues C807, C826, C834, and C837 each contribute to the Zn(2+) site. Positions 865 to 910 (QVGGINGNRNTGSGRYTLNMMVDIFLGAKSAKIQSGIFGKGAAYSR) are DNA Holliday junction binding. 3' overhang DNA-binding stretches follow at residues 881 to 883 (TLN), 892 to 896 (AKSAK), and 931 to 937 (YITANDQ). Residues 983–1063 (EEMVKKCLGE…DKYSEWTTPE (81 aa)) form the HRDC domain. The segment at 998 to 1015 (KTLGKIFDVHYFNIFSTS) is necessary for ssDNA and DNA Holliday junction binding. The interval 1068 to 1183 (QSVDTAPGSA…HFLQPSYAVL (116 aa)) is disordered. A compositionally biased stretch (polar residues) spans 1091–1101 (VTSSYFGGNAN). The Nuclear localization signal signature appears at 1104–1120 (RKRKRLPNSGESKRKKT). Residues 1133–1142 (ARYRRARRAP) are compositionally biased toward basic residues. Positions 1143–1158 (GSRAAAPAQSSALRGA) are enriched in low complexity.

This sequence belongs to the helicase family. RecQ subfamily. In terms of assembly, monomer. Homodimer (via N-terminus). Homotetramer (via N-terminus); dimer of dimers. Homohexamer (via N-terminus). Self-association negatively regulates DNA unwinding amplitude and rate. Oligomer complexes dissociate into monomer in presence of ATP. Zn(2+) serves as cofactor.

It localises to the nucleus. The catalysed reaction is Couples ATP hydrolysis with the unwinding of duplex DNA by translocating in the 3'-5' direction.. It catalyses the reaction ATP + H2O = ADP + phosphate + H(+). Its function is as follows. ATP-dependent DNA helicase that unwinds single- and double-stranded DNA in a 3'-5' direction. Participates in DNA replication and repair. Involved in 5'-end resection of DNA during double-strand break (DSB) repair. Negatively regulates sister chromatid exchange (SCE). Stimulates DNA 4-way junction branch migration and DNA Holliday junction dissolution. Binds DNA. Binds single-stranded DNA (ssDNA), forked duplex DNA and DNA Holliday junction. The protein is RecQ-like DNA helicase BLM (BLM) of Gallus gallus (Chicken).